Consider the following 96-residue polypeptide: Small ribosomal subunit protein bS20 (96 aa).

This sequence belongs to the bacterial ribosomal protein bS20 family.

In terms of biological role, binds directly to 16S ribosomal RNA. The chain is Small ribosomal subunit protein bS20 from Anaplasma marginale (strain St. Maries).